The chain runs to 156 residues: V-type proton ATPase 16 kDa proteolipid subunit c (156 aa).

Over 1–7 (MAENPIY) the chain is Lumenal. The helical transmembrane segment at 8 to 30 (GPFFGVMGAASAIIFSALGAAYG) threads the bilayer. The Cytoplasmic portion of the chain corresponds to 31–52 (TAKSGTGIAAMSVMRPELIMKS). Residues 53–73 (IIPVVMAGIIAIYGLVVAVLI) traverse the membrane as a helical segment. Topologically, residues 74-92 (AGSLDSPSNNYTLYRGFIH) are lumenal. The chain crosses the membrane as a helical span at residues 93 to 114 (LGAGLAVGFSGLAAGFAIGIVG). Residues 115-126 (DAGVRGTAQQPR) are Cytoplasmic-facing. The chain crosses the membrane as a helical span at residues 127 to 152 (LFVGMILILIFAEVLGLYGLIVAIYL). At 153–156 (YTKQ) the chain is on the lumenal side.

The protein belongs to the V-ATPase proteolipid subunit family. V-ATPase is a heteromultimeric enzyme made up of two complexes: the ATP-hydrolytic V1 complex and the proton translocation V0 complex. The V1 complex consists of three catalytic AB heterodimers that form a heterohexamer, three peripheral stalks each consisting of EG heterodimers, one central rotor including subunits D and F, and the regulatory subunits C and H. The proton translocation complex V0 consists of the proton transport subunit a, a ring of proteolipid subunits c9c'', rotary subunit d, subunits e and f, and the accessory subunits VhaAC45 and ATP6AP2.

It is found in the membrane. Functionally, proton-conducting pore forming subunit of the V0 complex of vacuolar(H+)-ATPase (V-ATPase), a multisubunit enzyme composed of a peripheral complex (V1) that hydrolyzes ATP and a membrane integral complex (V0) that translocates protons. V-ATPase is responsible for acidifying and maintaining the pH of intracellular compartments and in some cell types, is targeted to the plasma membrane, where it is responsible for acidifying the extracellular environment. This chain is V-type proton ATPase 16 kDa proteolipid subunit c (VHA16), found in Manduca sexta (Tobacco hawkmoth).